The primary structure comprises 447 residues: ATP synthase subunit beta (447 aa).

Residue 147-154 (GGAGVGKT) participates in ATP binding.

The protein belongs to the ATPase alpha/beta chains family. As to quaternary structure, F-type ATPases have 2 components, CF(1) - the catalytic core - and CF(0) - the membrane proton channel. CF(1) has five subunits: alpha(3), beta(3), gamma(1), delta(1), epsilon(1). CF(0) has three main subunits: a(1), b(2) and c(9-12). The alpha and beta chains form an alternating ring which encloses part of the gamma chain. CF(1) is attached to CF(0) by a central stalk formed by the gamma and epsilon chains, while a peripheral stalk is formed by the delta and b chains.

It localises to the cell membrane. It catalyses the reaction ATP + H2O + 4 H(+)(in) = ADP + phosphate + 5 H(+)(out). Its function is as follows. Produces ATP from ADP in the presence of a proton gradient across the membrane. The catalytic sites are hosted primarily by the beta subunits. The polypeptide is ATP synthase subunit beta (Carsonella ruddii (strain PV)).